Consider the following 439-residue polypeptide: CBL-interacting serine/threonine-protein kinase 26 (439 aa).

Residues 13–268 (YEVGKTLGQG…IPEVLGDAWF (256 aa)) form the Protein kinase domain. ATP contacts are provided by residues 19–27 (LGQGTFAKV) and Lys42. Asp136 functions as the Proton acceptor in the catalytic mechanism. The segment at 154 to 183 (DFGLSALSRQVRGDGLLHTACGTPNYAAPE) is activation loop. At Ser158 the chain carries Phosphoserine. Position 172 is a phosphothreonine (Thr172). The region spanning 306–330 (EQPTSMNAFELISMSRALDLGNLFE) is the NAF domain. Residues 336–365 (KRETRFAAKGAANDLVQKIEEASKPLGFDI) form a PPI region.

It belongs to the protein kinase superfamily. CAMK Ser/Thr protein kinase family. SNF1 subfamily. As to quaternary structure, interacts with RBOHF (via N-terminus). Requires Mn(2+) as cofactor.

The protein resides in the cell membrane. The enzyme catalyses L-seryl-[protein] + ATP = O-phospho-L-seryl-[protein] + ADP + H(+). It catalyses the reaction L-threonyl-[protein] + ATP = O-phospho-L-threonyl-[protein] + ADP + H(+). CIPK serine-threonine protein kinases interact with CBL proteins. Binding of a CBL protein to the regulatory NAF domain of CIPK protein lead to the activation of the kinase in a calcium-dependent manner. Involved in the calcium-dependent regulation of reactive oxygen species production by the NADPH oxidase RBOHF. The chain is CBL-interacting serine/threonine-protein kinase 26 (CIPK26) from Arabidopsis thaliana (Mouse-ear cress).